The chain runs to 227 residues: MAYPFQLGLQDATSPIMEELTNFHDHTLMIVFLISSLVLYIISLMLTTKLTHTSTMDAQEVETIWTILPAVILILIALPSLRILYMMDEINNPVLTVKTMGHQWYWSYEYTDYEDLCFDSYMVPTNDLKPGELRLLEVDNRVVLPMELPIRMLISSEDVLHSWAVPSLGLKTDAIPGRLNQATVTSNRPGLFYGQCSEICGSNHSFMPIVLEMVPLKYFENWSASMI.

Topologically, residues 1 to 14 (MAYPFQLGLQDATS) are mitochondrial intermembrane. The helical transmembrane segment at 15–45 (PIMEELTNFHDHTLMIVFLISSLVLYIISLM) threads the bilayer. The Mitochondrial matrix segment spans residues 46-59 (LTTKLTHTSTMDAQ). The chain crosses the membrane as a helical span at residues 60–87 (EVETIWTILPAVILILIALPSLRILYMM). Residues 88-227 (DEINNPVLTV…YFENWSASMI (140 aa)) are Mitochondrial intermembrane-facing. Residues H161, C196, E198, C200, H204, and M207 each contribute to the Cu cation site. Residue E198 participates in Mg(2+) binding. Y218 carries the post-translational modification Phosphotyrosine.

It belongs to the cytochrome c oxidase subunit 2 family. As to quaternary structure, component of the cytochrome c oxidase (complex IV, CIV), a multisubunit enzyme composed of 14 subunits. The complex is composed of a catalytic core of 3 subunits MT-CO1, MT-CO2 and MT-CO3, encoded in the mitochondrial DNA, and 11 supernumerary subunits COX4I, COX5A, COX5B, COX6A, COX6B, COX6C, COX7A, COX7B, COX7C, COX8 and NDUFA4, which are encoded in the nuclear genome. The complex exists as a monomer or a dimer and forms supercomplexes (SCs) in the inner mitochondrial membrane with NADH-ubiquinone oxidoreductase (complex I, CI) and ubiquinol-cytochrome c oxidoreductase (cytochrome b-c1 complex, complex III, CIII), resulting in different assemblies (supercomplex SCI(1)III(2)IV(1) and megacomplex MCI(2)III(2)IV(2)). Found in a complex with TMEM177, COA6, COX18, COX20, SCO1 and SCO2. Interacts with TMEM177 in a COX20-dependent manner. Interacts with COX20. Interacts with COX16. It depends on Cu cation as a cofactor.

It is found in the mitochondrion inner membrane. It catalyses the reaction 4 Fe(II)-[cytochrome c] + O2 + 8 H(+)(in) = 4 Fe(III)-[cytochrome c] + 2 H2O + 4 H(+)(out). In terms of biological role, component of the cytochrome c oxidase, the last enzyme in the mitochondrial electron transport chain which drives oxidative phosphorylation. The respiratory chain contains 3 multisubunit complexes succinate dehydrogenase (complex II, CII), ubiquinol-cytochrome c oxidoreductase (cytochrome b-c1 complex, complex III, CIII) and cytochrome c oxidase (complex IV, CIV), that cooperate to transfer electrons derived from NADH and succinate to molecular oxygen, creating an electrochemical gradient over the inner membrane that drives transmembrane transport and the ATP synthase. Cytochrome c oxidase is the component of the respiratory chain that catalyzes the reduction of oxygen to water. Electrons originating from reduced cytochrome c in the intermembrane space (IMS) are transferred via the dinuclear copper A center (CU(A)) of subunit 2 and heme A of subunit 1 to the active site in subunit 1, a binuclear center (BNC) formed by heme A3 and copper B (CU(B)). The BNC reduces molecular oxygen to 2 water molecules using 4 electrons from cytochrome c in the IMS and 4 protons from the mitochondrial matrix. In Dacnomys millardi (Millard's rat), this protein is Cytochrome c oxidase subunit 2 (MT-CO2).